A 1498-amino-acid chain; its full sequence is Rap guanine nucleotide exchange factor 2 (1498 aa).

Disordered regions lie at residues 40–59 (HVSS…SSSL) and 68–101 (SEAG…SDPL). The span at 83–94 (VDSEDDDDEEDI) shows a compositional bias: acidic residues. 135-252 (AFANMTMSVR…QKVEEEGEIV (118 aa)) is an a nucleoside 3',5'-cyclic phosphate binding site. One can recognise an N-terminal Ras-GEF domain in the interval 267–380 (KGHIVIKGTS…RLLNIACAAK (114 aa)). In terms of domain architecture, PDZ spans 385–468 (LMTLTKPSRE…LSITVKTNLF (84 aa)). A Phosphoserine modification is found at Ser501. A Ras-associating domain is found at 606–692 (PDQVLRVFKA…GRYYLKNNME (87 aa)). Thr644 is modified (phosphothreonine). Residues 717–944 (STVEVATQLS…SQGSTNATVL (228 aa)) form the Ras-GEF domain. Residues Ser806, Ser930, Ser933, Ser1022, Ser1079, Ser1088, Ser1094, Ser1115, Ser1119, Ser1158, and Ser1175 each carry the phosphoserine modification. Residues 1002-1048 (PATNTLPKNPGDKKPVKSETSPVAPRAGSQQKAQAQPPPPQPQPQHK) form a disordered region. The segment at 1094 to 1159 (SLERHKKQAE…RSSIVSNSSF (66 aa)) is disordered. Composition is skewed to low complexity over residues 1110 to 1124 (SSQL…QSSP) and 1140 to 1159 (SDSG…NSSF). Disordered stretches follow at residues 1224 to 1257 (STEE…GSHD), 1304 to 1371 (TKYN…TKPV), and 1392 to 1498 (EGRY…VSAV). Polar residues-rich tracts occupy residues 1246–1257 (GSWTSCSSGSHD) and 1306–1330 (YNRQ…SSTG). The span at 1354-1365 (EAESSSVTSVTT) shows a compositional bias: low complexity. The segment covering 1487-1498 (TEEDEDEQVSAV) has biased composition (acidic residues).

It belongs to the RAPGEF2 family. Found in a complex, at least composed of KIDINS220, MAGI2, NTRK1 and RAPGEF2; the complex is mainly formed at late endosomes in a neuronal growth factor (NGF)-dependent manner. Interacts (via C-terminal domain) with NEDD4 (via WW domains); this interaction leads to ubiquitination and degradation via the proteasome pathway in a cAMP-independent manner. Interacts with MAGI1 (via PDZ domain). Interacts with ADRB1 (via C-terminal PDZ motif); the interaction is direct. Interacts (via Ras-associating domain) with RAP1A (via GTP-bound active form). Interacts weakly with HRAS (via GDP- and GTP-bound forms). Interacts (via C-terminal domain) with MAGI2 (via PDZ and WW domains). Interacts with CDH1, CTNNB1 and TJP1. Post-translationally, ubiquitinated by NEDD4, leading to proteasomal degradation. In terms of processing, phosphorylation by PLK2 promotes its activity.

It localises to the cell junction. Its subcellular location is the cytoplasm. It is found in the perinuclear region. The protein resides in the cell membrane. The protein localises to the late endosome. Functionally, functions as a guanine nucleotide exchange factor (GEF), which activates Rap and Ras family of small GTPases by exchanging bound GDP for free GTP in a cAMP-dependent manner. Serves as a link between cell surface receptors and Rap/Ras GTPases in intracellular signaling cascades. Also acts as an effector for Rap1 by direct association with Rap1-GTP thereby leading to the amplification of Rap1-mediated signaling. Shows weak activity on HRAS. It is controversial whether RAPGEF2 binds cAMP and cGMP or not. Its binding to ligand-activated beta-1 adrenergic receptor ADRB1 leads to the Ras activation through the G(s)-alpha signaling pathway. Involved in the cAMP-induced Ras and Erk1/2 signaling pathway that leads to sustained inhibition of long term melanogenesis by reducing dendrite extension and melanin synthesis. Also provides inhibitory signals for cell proliferation of melanoma cells and promotes their apoptosis in a cAMP-independent nanner. Regulates cAMP-induced neuritogenesis by mediating the Rap1/B-Raf/ERK signaling through a pathway that is independent on both PKA and RAPGEF3/RAPGEF4. Involved in neuron migration and in the formation of the major forebrain fiber connections forming the corpus callosum, the anterior commissure and the hippocampal commissure during brain development. Involved in neuronal growth factor (NGF)-induced sustained activation of Rap1 at late endosomes and in brain-derived neurotrophic factor (BDNF)-induced axon outgrowth of hippocampal neurons. Plays a role in the regulation of embryonic blood vessel formation and in the establishment of basal junction integrity and endothelial barrier function. May be involved in the regulation of the vascular endothelial growth factor receptor KDR and cadherin CDH5 expression at allantois endothelial cell-cell junctions. In Canis lupus familiaris (Dog), this protein is Rap guanine nucleotide exchange factor 2 (RAPGEF2).